We begin with the raw amino-acid sequence, 321 residues long: Ribosomal RNA small subunit methyltransferase H (321 aa).

S-adenosyl-L-methionine is bound by residues 44-46 (GGH), Asp-64, Phe-88, Asp-109, and Gln-116.

The protein belongs to the methyltransferase superfamily. RsmH family.

The protein resides in the cytoplasm. The enzyme catalyses cytidine(1402) in 16S rRNA + S-adenosyl-L-methionine = N(4)-methylcytidine(1402) in 16S rRNA + S-adenosyl-L-homocysteine + H(+). Its function is as follows. Specifically methylates the N4 position of cytidine in position 1402 (C1402) of 16S rRNA. In Methylobacillus flagellatus (strain ATCC 51484 / DSM 6875 / VKM B-1610 / KT), this protein is Ribosomal RNA small subunit methyltransferase H.